The sequence spans 252 residues: Protein A47 (252 aa).

This sequence belongs to the orthopoxvirus A47 protein family.

The chain is Protein A47 from Vaccinia virus (strain Western Reserve) (VACV).